The following is a 608-amino-acid chain: MTHSEYRDEYCGAVTESLIEQTISVVGWVHRRRDHGGVIFLDMRDRAGILQVVVDPDTPEAFATADAVRPEYVLKITGRVRRRYEGTENANMTSGHIELLAKEIEVLAKSETPPFPLNDEKSTVSEDLRLKYRYLDMRRPQMQDRMVFRAKATSAIRRYLDDHGFLDVETPILTRATPEGARDYLVPSRTRPGNFFALPQSPQLFKQLLMVAGFDRYYQIAKCFRDEDLRADRQPEFTQVDIETSFLNEEEIMNINEGLIKHVFKTMMDVEFEKFPRMTYAEAMRDYASDKPDLRIPLKLIDVADLMKDVDFKVFAGPANDPKGRVAALRIPGGASLSRKQIDAYTKFVGIYGARGLAYIKVNDASNINNGVDKESGLQSPIIKNMTDDVLVSLIERTGAESNDIIFFGADKASVVNDAIGALRQKIGLDLEMTTCEWAPLWVTDFPMFEETEDGRWTSMHHPFTKPKGSVEELKTNPESALSIAYDMVLNGTEVGGGSLRINTLEMQTAVFEALGIDDQEAEDKFGFLLDALKFGAPPHGGLAFGLDRLIMLMVGASSIRDVIAFPKTKTAECPLTQAPAEVNTKQLRELGIRVREKVQADTSKPAE.

Position 179 (glutamate 179) interacts with L-aspartate. The tract at residues 203-206 (QLFK) is aspartate. L-aspartate is bound at residue arginine 225. ATP is bound by residues 225–227 (RDE) and glutamine 234. L-aspartate is bound at residue histidine 461. Glutamate 494 contacts ATP. Arginine 501 is an L-aspartate binding site. 546 to 549 (GLDR) is an ATP binding site.

The protein belongs to the class-II aminoacyl-tRNA synthetase family. Type 1 subfamily. In terms of assembly, homodimer.

It localises to the cytoplasm. It catalyses the reaction tRNA(Asx) + L-aspartate + ATP = L-aspartyl-tRNA(Asx) + AMP + diphosphate. Aspartyl-tRNA synthetase with relaxed tRNA specificity since it is able to aspartylate not only its cognate tRNA(Asp) but also tRNA(Asn). Reaction proceeds in two steps: L-aspartate is first activated by ATP to form Asp-AMP and then transferred to the acceptor end of tRNA(Asp/Asn). This is Aspartate--tRNA(Asp/Asn) ligase from Psychrobacter arcticus (strain DSM 17307 / VKM B-2377 / 273-4).